The sequence spans 222 residues: Adenylate kinase (222 aa).

Position 2 (S2) is a propeptide, removed in mature form. 2 positions are modified to N-acetylserine: S2 and S3. 16 to 21 (GAGKGT) lines the ATP pocket. The segment at 36–65 (ATGDMLRSQIAKGTQLGLEAKKIMDQGGLV) is NMP. AMP is bound by residues T37, R42, 63-65 (GLV), 92-95 (GFPR), and Q99. The tract at residues 133–170 (GRLIHPASGRSYHKIFNPPKEDMKDDVTGEALVQRSDD) is LID. Residues R134 and 143–144 (SY) contribute to the ATP site. AMP contacts are provided by R167 and R178. An ATP-binding site is contributed by Q206.

This sequence belongs to the adenylate kinase family. AK2 subfamily. As to quaternary structure, monomer.

It localises to the cytoplasm. Its subcellular location is the cytosol. It is found in the mitochondrion intermembrane space. The catalysed reaction is AMP + ATP = 2 ADP. Its function is as follows. Catalyzes the reversible transfer of the terminal phosphate group between ATP and AMP. Plays an important role in cellular energy homeostasis and in adenine nucleotide metabolism. Adenylate kinase activity is critical for regulation of the phosphate utilization and the AMP de novo biosynthesis pathways. This chain is Adenylate kinase, found in Saccharomyces cerevisiae (strain RM11-1a) (Baker's yeast).